The primary structure comprises 72 residues: Large ribosomal subunit protein uL29 (72 aa).

Belongs to the universal ribosomal protein uL29 family.

The sequence is that of Large ribosomal subunit protein uL29 from Prochlorococcus marinus (strain MIT 9301).